A 785-amino-acid chain; its full sequence is E3 UFM1-protein ligase 1 homolog (785 aa).

Residues 404 to 482 (NASFQDQDDD…AGGGGGNKKT (79 aa)) are disordered.

The protein belongs to the UFL1 family.

E3 UFM1-protein ligase that mediates ufmylation of target proteins. This chain is E3 UFM1-protein ligase 1 homolog, found in Drosophila persimilis (Fruit fly).